The sequence spans 400 residues: Subtilisin-like protease 11 (400 aa).

The N-terminal stretch at 1–19 is a signal peptide; the sequence is MGLFTVVFTAIAALSAVDA. The propeptide occupies 20–117; sequence AELLRSPNSK…VEHDRYVYID (98 aa). Positions 35–116 constitute an Inhibitor I9 domain; the sequence is SYLVVMKDSV…FVEHDRYVYI (82 aa). The 274-residue stretch at 127–400 folds into the Peptidase S8 domain; that stretch reads SWGLGRVSHR…NKLLYNGSGQ (274 aa). Residue N138 is glycosylated (N-linked (GlcNAc...) asparagine). Residues D159 and H191 each act as charge relay system in the active site. N252, N336, and N337 each carry an N-linked (GlcNAc...) asparagine glycan. S346 acts as the Charge relay system in catalysis. Residues N388 and N396 are each glycosylated (N-linked (GlcNAc...) asparagine).

Belongs to the peptidase S8 family.

Its subcellular location is the secreted. Secreted subtilisin-like serine protease with keratinolytic activity that contributes to pathogenicity. The sequence is that of Subtilisin-like protease 11 (SUB11) from Arthroderma gypseum (strain ATCC MYA-4604 / CBS 118893) (Microsporum gypseum).